A 249-amino-acid polypeptide reads, in one-letter code: Probable phosphatase VVA0289 (249 aa).

Zn(2+)-binding residues include histidine 8, histidine 10, histidine 16, histidine 41, glutamate 74, histidine 102, histidine 132, aspartate 194, and histidine 196.

Belongs to the PHP family. Zn(2+) is required as a cofactor.

In Vibrio vulnificus (strain YJ016), this protein is Probable phosphatase VVA0289.